A 434-amino-acid chain; its full sequence is UDP-N-acetylmuramoylalanine--D-glutamate ligase (434 aa).

Position 126 to 132 (126 to 132 (GTSGKTT)) interacts with ATP.

It belongs to the MurCDEF family.

The protein localises to the cytoplasm. The enzyme catalyses UDP-N-acetyl-alpha-D-muramoyl-L-alanine + D-glutamate + ATP = UDP-N-acetyl-alpha-D-muramoyl-L-alanyl-D-glutamate + ADP + phosphate + H(+). It functions in the pathway cell wall biogenesis; peptidoglycan biosynthesis. In terms of biological role, cell wall formation. Catalyzes the addition of glutamate to the nucleotide precursor UDP-N-acetylmuramoyl-L-alanine (UMA). The chain is UDP-N-acetylmuramoylalanine--D-glutamate ligase from Desulfovibrio desulfuricans (strain ATCC 27774 / DSM 6949 / MB).